The following is a 284-amino-acid chain: Spermidine synthase (284 aa).

Residues 6–241 (NGWFSEISEF…GSIGFILCSL (236 aa)) enclose the PABS domain. Residue Gln-37 participates in S-adenosyl 3-(methylsulfanyl)propylamine binding. Residue Tyr-67 coordinates putrescine. Residues Gln-68, Asp-92, Glu-112, 143 to 144 (DG), and Asp-161 contribute to the S-adenosyl 3-(methylsulfanyl)propylamine site. Residue Asp-161 is the Proton acceptor of the active site. Putrescine contacts are provided by residues 161–164 (DSSD) and Tyr-229.

This sequence belongs to the spermidine/spermine synthase family.

The catalysed reaction is S-adenosyl 3-(methylsulfanyl)propylamine + putrescine = S-methyl-5'-thioadenosine + spermidine + H(+). It functions in the pathway amine and polyamine biosynthesis; spermidine biosynthesis; spermidine from putrescine: step 1/1. In terms of biological role, catalyzes the production of spermidine from putrescine and decarboxylated S-adenosylmethionine (dcSAM). Has a strong preference for putrescine as substrate. The chain is Spermidine synthase (spsA) from Dictyostelium discoideum (Social amoeba).